A 237-amino-acid chain; its full sequence is MDLLLGIIQGLTEFLPVSSSGHLTLLSHLLKTDLNAYQTAVLHLGTLVSVVLFAFDGIRRSLRSWRIILNLIVSTIPAGVFGVLFEKQIDQLFSSPRFLPLFFSVTALILMFTRYSSSGEKRMENMSFLDALLVGIAQLFALFPGISRSGITVSSLLFMKYRGEDALQYSFLMSIPVVLGAGILGLEKGNITILAPIFAFLSGLFALYVLSRSVRSGKIWQFSYYCLFVAILSYLVG.

The next 7 membrane-spanning stretches (helical) occupy residues 38–58 (QTAVLHLGTLVSVVLFAFDGI), 65–85 (WRIILNLIVSTIPAGVFGVLF), 92–112 (LFSSPRFLPLFFSVTALILMF), 126–146 (MSFLDALLVGIAQLFALFPGI), 166–186 (ALQYSFLMSIPVVLGAGILGL), 191–211 (ITILAPIFAFLSGLFALYVLS), and 217–237 (GKIWQFSYYCLFVAILSYLVG).

Belongs to the UppP family.

It is found in the cell inner membrane. It carries out the reaction di-trans,octa-cis-undecaprenyl diphosphate + H2O = di-trans,octa-cis-undecaprenyl phosphate + phosphate + H(+). Its function is as follows. Catalyzes the dephosphorylation of undecaprenyl diphosphate (UPP). Confers resistance to bacitracin. This is Undecaprenyl-diphosphatase from Thermotoga petrophila (strain ATCC BAA-488 / DSM 13995 / JCM 10881 / RKU-1).